Here is an 89-residue protein sequence, read N- to C-terminus: Transcriptional regulator WhiB2 (89 aa).

The segment covering 1 to 15 (MVPEAPAPFEEPLPP) has biased composition (pro residues). Residues 1-24 (MVPEAPAPFEEPLPPEATDQWQDR) are disordered. One can recognise a 4Fe-4S Wbl-type domain in the interval 26–83 (LCAQTDPEAFFPEKGGSTREAKKICMGCEVRHECLEYALAHDERFGIWGGLSERERRR). Cys27 provides a ligand contact to [4Fe-4S] cluster. Ser42 is subject to Phosphoserine. The [4Fe-4S] cluster site is built by Cys50, Cys53, and Cys59.

It belongs to the WhiB family. [4Fe-4S] cluster is required as a cofactor. May be phosphorylated, possibly on Ser-42. In terms of processing, the cluster is degraded quickly in the presence of air. Upon cluster removal intramolecular disulfide bonds are formed. Post-translationally, the Fe-S cluster can be nitrosylated by nitric oxide (NO).

The protein resides in the cytoplasm. Its function is as follows. Acts as a transcriptional regulator. Probably redox-responsive. The apo- but not holo-form probably binds DNA. Functionally, the apo-form functions as a chaperone, preventing aggregation or helping in correct refolding of a number of substrates; this activity does not require ATP or the ability to bind a Fe-S cluster. Chaperone activity is insensitive to the redox state of its cysteine residues. The apo-form has no protein disulfide reductase activity. The apo-form binds to its own promoter. This Mycobacterium tuberculosis (strain ATCC 25618 / H37Rv) protein is Transcriptional regulator WhiB2 (whiB2).